A 442-amino-acid chain; its full sequence is GTPase Der (442 aa).

2 consecutive EngA-type G domains span residues 3-167 (PTIV…PADD) and 177-350 (PRVA…AAAM). Residues 9–16 (GRPNVGKS), 56–60 (DTAGF), 119–122 (NKAE), 183–190 (GRPNVGKS), 230–234 (DTAGL), and 295–298 (NKWD) each bind GTP. One can recognise a KH-like domain in the interval 351–435 (SNLSTPRLTR…PLRIQFRTAH (85 aa)).

The protein belongs to the TRAFAC class TrmE-Era-EngA-EngB-Septin-like GTPase superfamily. EngA (Der) GTPase family. In terms of assembly, associates with the 50S ribosomal subunit.

Its function is as follows. GTPase that plays an essential role in the late steps of ribosome biogenesis. This chain is GTPase Der, found in Azoarcus sp. (strain BH72).